The following is a 135-amino-acid chain: DNA-directed RNA polymerase subunit omega (135 aa).

This sequence belongs to the RNA polymerase subunit omega family. As to quaternary structure, the RNAP catalytic core consists of 2 alpha, 1 beta, 1 beta' and 1 omega subunit. When a sigma factor is associated with the core the holoenzyme is formed, which can initiate transcription.

It catalyses the reaction RNA(n) + a ribonucleoside 5'-triphosphate = RNA(n+1) + diphosphate. Its function is as follows. Promotes RNA polymerase assembly. Latches the N- and C-terminal regions of the beta' subunit thereby facilitating its interaction with the beta and alpha subunits. The sequence is that of DNA-directed RNA polymerase subunit omega from Rhizobium meliloti (strain 1021) (Ensifer meliloti).